A 271-amino-acid chain; its full sequence is Orotidine 5'-phosphate decarboxylase (271 aa).

The active-site Proton donor is Lys-97.

Belongs to the OMP decarboxylase family. Type 2 subfamily.

The catalysed reaction is orotidine 5'-phosphate + H(+) = UMP + CO2. It functions in the pathway pyrimidine metabolism; UMP biosynthesis via de novo pathway; UMP from orotate: step 2/2. This Leptospira borgpetersenii serovar Hardjo-bovis (strain JB197) protein is Orotidine 5'-phosphate decarboxylase.